We begin with the raw amino-acid sequence, 185 residues long: Dioxygenase easH (185 aa).

Fe cation contacts are provided by H17, D19, and H93.

Belongs to the PhyH family. As to quaternary structure, homodimer. Requires Fe cation as cofactor.

It participates in alkaloid biosynthesis; ergot alkaloid biosynthesis. Its function is as follows. Dioxygenase; part of the gene cluster that mediates the biosynthesis of fungal ergot alkaloid ergovaline, the predominant ergopeptine product in E.festucae var. lolii. DmaW catalyzes the first step of ergot alkaloid biosynthesis by condensing dimethylallyl diphosphate (DMAP) and tryptophan to form 4-dimethylallyl-L-tryptophan. The second step is catalyzed by the methyltransferase easF that methylates 4-dimethylallyl-L-tryptophan in the presence of S-adenosyl-L-methionine, resulting in the formation of 4-dimethylallyl-L-abrine. The catalase easC and the FAD-dependent oxidoreductase easE then transform 4-dimethylallyl-L-abrine to chanoclavine-I which is further oxidized by easD in the presence of NAD(+), resulting in the formation of chanoclavine-I aldehyde. Agroclavine dehydrogenase easG then mediates the conversion of chanoclavine-I aldehyde to agroclavine via a non-enzymatic adduct reaction: the substrate is an iminium intermediate that is formed spontaneously from chanoclavine-I aldehyde in the presence of glutathione. The presence of easA is not required to complete this reaction. Further conversion of agroclavine to paspalic acid is a two-step process involving oxidation of agroclavine to elymoclavine and of elymoclavine to paspalic acid, the second step being performed by the elymoclavine oxidase cloA. Paspalic acid is then further converted to D-lysergic acid. Ergovaline is assembled from D-lysergic acid and three different amino acids by the D-lysergyl-peptide-synthetase composed of a monomudular (lpsB) and a trimodular (lpsA) nonribosomal peptide synthetase subunit. The sequence is that of Dioxygenase easH from Epichloe festucae var. lolii (Neotyphodium lolii).